We begin with the raw amino-acid sequence, 119 residues long: Amicyanin-alpha (119 aa).

The first 20 residues, 1-20, serve as a signal peptide directing secretion; the sequence is MRALAFAAALAAFSATAALA. The Plastocyanin-like domain occupies 21 to 119; sequence AGALEAVQEA…PFMKGKVVVE (99 aa). His67, Cys106, His109, and Met112 together coordinate Cu cation.

Requires Cu cation as cofactor.

Its subcellular location is the periplasm. It participates in one-carbon metabolism; methylamine degradation. In terms of biological role, primary acceptor of electrons from methylamine dehydrogenase. Passes those electrons on either a soluble cytochrome c or to pseudoazurin. This Methylorubrum extorquens (strain ATCC 14718 / DSM 1338 / JCM 2805 / NCIMB 9133 / AM1) (Methylobacterium extorquens) protein is Amicyanin-alpha (mauC).